A 533-amino-acid chain; its full sequence is Tyrosine-protein kinase transforming protein Fps (533 aa).

The interval 1–46 (ASGQLHRPQPQEHTSTSAAAGTWRHTQASESRHRLPHCSAAPSHQD) is disordered. Residues 11–29 (QEHTSTSAAAGTWRHTQAS) are compositionally biased toward polar residues. An F-BAR; degenerate domain is found at 50 to 124 (MGFGPELWCP…LQEDRQSVCS (75 aa)). Residues 171–260 (WYHGAIPRSE…KSGIVLTRAV (90 aa)) enclose the SH2 domain. The Protein kinase domain maps to 272–525 (VLLGERIGRG…PSFGAVHQDL (254 aa)). ATP contacts are provided by residues 278–286 (IGRGNFGEV) and K301. D394 acts as the Proton acceptor in catalysis. A Phosphotyrosine; by autocatalysis modification is found at Y424.

The protein belongs to the protein kinase superfamily. Tyr protein kinase family. Fes/fps subfamily.

The enzyme catalyses L-tyrosyl-[protein] + ATP = O-phospho-L-tyrosyl-[protein] + ADP + H(+). This is Tyrosine-protein kinase transforming protein Fps (V-FPS) from Gallus gallus (Chicken).